Consider the following 557-residue polypeptide: Iron-sulfur cluster assembly SufBD family protein ABCI8, chloroplastic (557 aa).

The interval 1-47 is disordered; sequence MASLLANGISSFSPQPTSDSSKSPKGFHPKPESLKFPSPKSLNPTRP. A chloroplast-targeting transit peptide spans 1–52; that stretch reads MASLLANGISSFSPQPTSDSSKSPKGFHPKPESLKFPSPKSLNPTRPIFKLR. The segment covering 10–24 has biased composition (low complexity); it reads SSFSPQPTSDSSKSP.

Belongs to the iron-sulfur cluster assembly SufBD family.

The protein localises to the plastid. It is found in the chloroplast. In terms of biological role, involved in light signaling, probably by mediating the transport and correct distribution of protoporphyrin IX, a chlorophyll precursor, in response to far-red light. This chain is Iron-sulfur cluster assembly SufBD family protein ABCI8, chloroplastic (ABCI8), found in Arabidopsis thaliana (Mouse-ear cress).